The chain runs to 264 residues: Indole-3-glycerol phosphate synthase (264 aa).

Belongs to the TrpC family.

It carries out the reaction 1-(2-carboxyphenylamino)-1-deoxy-D-ribulose 5-phosphate + H(+) = (1S,2R)-1-C-(indol-3-yl)glycerol 3-phosphate + CO2 + H2O. It functions in the pathway amino-acid biosynthesis; L-tryptophan biosynthesis; L-tryptophan from chorismate: step 4/5. This chain is Indole-3-glycerol phosphate synthase, found in Rhizorhabdus wittichii (strain DSM 6014 / CCUG 31198 / JCM 15750 / NBRC 105917 / EY 4224 / RW1) (Sphingomonas wittichii).